Reading from the N-terminus, the 351-residue chain is Phospho-N-acetylmuramoyl-pentapeptide-transferase (351 aa).

Transmembrane regions (helical) follow at residues 17-37 (TAYA…FIIS), 61-83 (MGIP…FFWI), 88-105 (IYFL…CLGF), 130-150 (ILFS…HVSI), 158-178 (SLKL…LISA), 190-210 (GLAI…AYLT), 230-250 (LVIF…FNAY), 254-274 (IMMG…VALI), 279-299 (ILFA…IIQV), and 328-348 (QVVI…LSTI).

The protein belongs to the glycosyltransferase 4 family. MraY subfamily. The cofactor is Mg(2+).

Its subcellular location is the cell inner membrane. It carries out the reaction UDP-N-acetyl-alpha-D-muramoyl-L-alanyl-gamma-D-glutamyl-meso-2,6-diaminopimeloyl-D-alanyl-D-alanine + di-trans,octa-cis-undecaprenyl phosphate = di-trans,octa-cis-undecaprenyl diphospho-N-acetyl-alpha-D-muramoyl-L-alanyl-D-glutamyl-meso-2,6-diaminopimeloyl-D-alanyl-D-alanine + UMP. It functions in the pathway cell wall biogenesis; peptidoglycan biosynthesis. Functionally, catalyzes the initial step of the lipid cycle reactions in the biosynthesis of the cell wall peptidoglycan: transfers peptidoglycan precursor phospho-MurNAc-pentapeptide from UDP-MurNAc-pentapeptide onto the lipid carrier undecaprenyl phosphate, yielding undecaprenyl-pyrophosphoryl-MurNAc-pentapeptide, known as lipid I. The polypeptide is Phospho-N-acetylmuramoyl-pentapeptide-transferase (Borrelia recurrentis (strain A1)).